Consider the following 279-residue polypeptide: Biotin synthase (279 aa).

Residues Met-1 to Arg-228 enclose the Radical SAM core domain. [4Fe-4S] cluster-binding residues include Cys-17, Cys-21, and Cys-24. [2Fe-2S] cluster-binding residues include Cys-61, Cys-96, Cys-154, and Arg-221.

The protein belongs to the radical SAM superfamily. Biotin synthase family. As to quaternary structure, homodimer. [4Fe-4S] cluster is required as a cofactor. [2Fe-2S] cluster serves as cofactor.

It catalyses the reaction (4R,5S)-dethiobiotin + (sulfur carrier)-SH + 2 reduced [2Fe-2S]-[ferredoxin] + 2 S-adenosyl-L-methionine = (sulfur carrier)-H + biotin + 2 5'-deoxyadenosine + 2 L-methionine + 2 oxidized [2Fe-2S]-[ferredoxin]. It participates in cofactor biosynthesis; biotin biosynthesis; biotin from 7,8-diaminononanoate: step 2/2. In terms of biological role, catalyzes the conversion of dethiobiotin (DTB) to biotin by the insertion of a sulfur atom into dethiobiotin via a radical-based mechanism. This Wolinella succinogenes (strain ATCC 29543 / DSM 1740 / CCUG 13145 / JCM 31913 / LMG 7466 / NCTC 11488 / FDC 602W) (Vibrio succinogenes) protein is Biotin synthase.